Consider the following 133-residue polypeptide: MRHRKSGRQLNRNSSHRQAMFRNMASSLVRHEIIKTTLPKAKELRRVVEPLITMAKQDSVANRRLAFARTRDKEVVGKLFNELGPRYEERPGGYTRIMKCGFRTGDNAPMAYIELVGRPEVEEVEEVAEEAAE.

This sequence belongs to the bacterial ribosomal protein bL17 family. Part of the 50S ribosomal subunit. Contacts protein L32.

The sequence is that of Large ribosomal subunit protein bL17 from Idiomarina loihiensis (strain ATCC BAA-735 / DSM 15497 / L2-TR).